We begin with the raw amino-acid sequence, 66 residues long: uncharacterized protein (66 aa).

The signal sequence occupies residues 1-19 (MRRLYRHLASFFLLPSCPG).

This is an uncharacterized protein from Saccharomyces cerevisiae (strain ATCC 204508 / S288c) (Baker's yeast).